A 196-amino-acid chain; its full sequence is MGLVKGNCGCYWGIKGHWSRNCSPVCEIANKNYYSRRGIAPRRTFWSVSNKSLVHLDANSLMIDYENVFYYTTDITSNKAIIESSERIRQDHGNPSVLINNAGVANGKTILEESEDERRRVFNVDILAHFSLVREFLPDMIKHNHGHIVTVASTASFLARPQLVSYSCCKTALIAFHEGLSQELRMRHNARKVRTT.

NADP(+)-binding residues include serine 47, aspartate 74, asparagine 101, arginine 134, tyrosine 166, and lysine 170. The active-site Proton acceptor is tyrosine 166. Lysine 170 (lowers pKa of active site Tyr) is an active-site residue.

The protein belongs to the short-chain dehydrogenases/reductases (SDR) family.

The catalysed reaction is a primary alcohol + NAD(+) = an aldehyde + NADH + H(+). It carries out the reaction a secondary alcohol + NAD(+) = a ketone + NADH + H(+). The protein operates within mycotoxin biosynthesis. Dehydrogenase; part of the Tox1B locus, one of the 2 loci that mediate the biosynthesis of T-toxin, a family of linear polyketides 37 to 45 carbons in length, of which the major component is 41 carbons, and which leads to high virulence to maize. One of the PKSs (PKS1 or PKS2) could synthesize a precursor, used subsequently by the other PKS as starter unit, to add additional carbons. Variability in the length of the final carbon backbone C35-47 could be achieved by varying the number of condensation cycles, or use of different starter or extender units or might be due to decarboxylation of the penultimate product, catalyzed by DEC1. Additional proteins are required for the biosynthesis of T-toxin, including oxidoreductases RED1, RED2, RED3, LAM1 and OXI1, as well as esterase TOX9. This Cochliobolus heterostrophus (strain C4 / ATCC 48331 / race T) (Southern corn leaf blight fungus) protein is Dehydrogenase RED3.